The following is a 733-amino-acid chain: Ribosomal protein S6 kinase alpha-2 (733 aa).

Positions 59-318 constitute a Protein kinase 1 domain; that stretch reads FELLKVLGQG…VEEIKRHPFF (260 aa). Residues 65–73 and K91 contribute to the ATP site; that span reads LGQGSYGKV. D184 functions as the Proton acceptor in the catalytic mechanism. A Phosphoserine; by PDPK1 modification is found at S218. An AGC-kinase C-terminal domain is found at 319-388; that stretch reads VTIDWNKLYR…VASSLVQEPS (70 aa). S377 is subject to Phosphoserine. One can recognise a Protein kinase 2 domain in the interval 415-672; that stretch reads YEIKEDIGVG…AVQVLKHPWI (258 aa). Residues 421–429 and K444 each bind ATP; that span reads IGVGSYSVC. D532 serves as the catalytic Proton acceptor.

The protein belongs to the protein kinase superfamily. AGC Ser/Thr protein kinase family. S6 kinase subfamily. In terms of assembly, forms a complex with either MAPK1/ERK2 or MAPK3/ERK1 in quiescent cells. Transiently dissociates following mitogenic stimulation. Interacts with FBXO5; cooperate to induce the metaphase arrest of early blastomeres; increases and stabilizes interaction of FBXO5 with CDC20. Mg(2+) serves as cofactor. Post-translationally, activated by phosphorylation at Ser-218 by PDPK1. Autophosphorylated on Ser-377, as part of the activation process. May be phosphorylated at Thr-356 and Ser-360 by MAPK1/ERK2 and MAPK3/ERK1. N-terminal myristoylation results in an activated kinase in the absence of added growth factors.

Its subcellular location is the nucleus. It is found in the cytoplasm. It catalyses the reaction L-seryl-[protein] + ATP = O-phospho-L-seryl-[protein] + ADP + H(+). The catalysed reaction is L-threonyl-[protein] + ATP = O-phospho-L-threonyl-[protein] + ADP + H(+). Its activity is regulated as follows. Upon extracellular signal or mitogen stimulation, phosphorylated at Thr-570 in the C-terminal kinase domain (CTKD) by MAPK1/ERK2 and MAPK3/ERK1. The activated CTKD then autophosphorylates Ser-377, allowing binding of PDPK1, which in turn phosphorylates Ser-218 in the N-terminal kinase domain (NTDK) leading to the full activation of the protein and subsequent phosphorylation of the substrates by the NTKD. Serine/threonine-protein kinase that acts downstream of ERK (MAPK1/ERK2 and MAPK3/ERK1) signaling and mediates mitogenic and stress-induced activation of transcription factors, regulates translation, and mediates cellular proliferation, survival, and differentiation. May function as tumor suppressor in epithelial ovarian cancer cells. The sequence is that of Ribosomal protein S6 kinase alpha-2 (Rps6ka2) from Mus musculus (Mouse).